The sequence spans 888 residues: MMEQYLEIKAANPGLLLFYRMGDFYELFFEDAEIASRALGITLTKRGKHQGADIPMCGVPVERSDDYLHRLIAAGHRVAVCEQTEDPSAARKRGNKSVVRRDVVRLVTPGTLTEDTLLDARANNYLLALARARASSGVDRFALAWIDISTAEFMVTECGANELAATLARINPNEVIVSDTLHGDPDLGALLRELPSVTPLPRDTFDGATAERRLCDYFAVATMDGLSAMSRLEATAAAAAVTYIDRTQIGQRPPLSPPSREASGSTMAIDPATRANLELTRTLAGERRGSLLDAIDRTMTAAGSRLLAQRLAAPLTDTAAITRRLDAVAALTADGAARDDIRAILRTAPDMSRALARLSLGRGGPRDLAGLRDGVMAADQTLARLAGLSDPPEGIAAAMQALRGPSRELARELGNALSENLPLMKRDGGFVREGYDTALDEARKLRDDSRLVVAAMQARYAEETGVKTLKIRHNNVLGYFVEVTAQHANRLMSAPLNATFIHRQTLAGQVRFTTSELGEIEARIANAGERALGLELDIFDRLAAMAIRNGDEIRNAAHAFAQLDVAASFAKLAIDENYTRPDIDASLSFAIEGGRHPVVEQALKRTGQPFIANACDLSPPPPPVEGSGESGQIWLLTGPNMAGKSTFLRQNALIALMAQVGSFVPASRARIGIIDRLFSRVGAADDLARGRSTFMVEMVETAVILNQASERALVILDEIGRGTATFDGLSIAWATIEHLHESNRCRALFATHYHELTALSAKLPRLFNATVRVKEWHGEVVFLHEVLPGAADRSYGIQVARLAGLPPSVIARAKSVLAKLEAQDRGSTVRVLVDDLPLFAVTSRTGESAPTGETSPLIEALKSLHPDEMSPREALDALYALKAKLPKQ.

Residues 249–271 (IGQRPPLSPPSREASGSTMAIDP) are disordered. 638 to 645 (GPNMAGKS) contacts ATP.

This sequence belongs to the DNA mismatch repair MutS family.

Its function is as follows. This protein is involved in the repair of mismatches in DNA. It is possible that it carries out the mismatch recognition step. This protein has a weak ATPase activity. This chain is DNA mismatch repair protein MutS, found in Nitrobacter winogradskyi (strain ATCC 25391 / DSM 10237 / CIP 104748 / NCIMB 11846 / Nb-255).